We begin with the raw amino-acid sequence, 929 residues long: Protocadherin gamma-B3 (929 aa).

The signal sequence occupies residues 1–30 (MGNSSGWRGPAGQRRMLFLFLLSLLDQALS). Cadherin domains are found at residues 31–133 (EPIR…PPTF), 134–242 (SQNI…PPVF), 243–347 (TQDM…APEI), 348–452 (TLAS…VPVF), 453–562 (HQAS…APLV), and 570–675 (EGSA…QPDL). The Extracellular portion of the chain corresponds to 31–691 (EPIRYAIPEE…SDPQAELQFH (661 aa)). The N-linked (GlcNAc...) asparagine glycan is linked to Asn136. Residues Asn419 and Asn545 are each glycosylated (N-linked (GlcNAc...) asparagine). A helical membrane pass occupies residues 692-712 (LVVALALISVLFLLAVILAIS). Over 713–929 (LRLRCSSRPA…KKKSGKKEKK (217 aa)) the chain is Cytoplasmic. Disordered stretches follow at residues 791–838 (NDNP…WPNN) and 899–929 (ATLT…KEKK). Over residues 919-929 (NKKKSGKKEKK) the composition is skewed to basic residues.

The protein resides in the cell membrane. Its function is as follows. Potential calcium-dependent cell-adhesion protein. May be involved in the establishment and maintenance of specific neuronal connections in the brain. The sequence is that of Protocadherin gamma-B3 (PCDHGB3) from Homo sapiens (Human).